The chain runs to 221 residues: Hypoxanthine-guanine phosphoribosyltransferase (221 aa).

Ser2 bears the N-acetylserine mark. Residues Lys85, 110-118 (DEVDDTRTT), Lys159, and 188-194 (WYAYPWE) contribute to the GMP site. Asp114 (proton acceptor) is an active-site residue.

The protein belongs to the purine/pyrimidine phosphoribosyltransferase family. As to quaternary structure, dimer. It depends on Mg(2+) as a cofactor.

Its subcellular location is the cytoplasm. The protein resides in the nucleus. It catalyses the reaction IMP + diphosphate = hypoxanthine + 5-phospho-alpha-D-ribose 1-diphosphate. It carries out the reaction GMP + diphosphate = guanine + 5-phospho-alpha-D-ribose 1-diphosphate. It functions in the pathway purine metabolism; IMP biosynthesis via salvage pathway; IMP from hypoxanthine: step 1/1. Subject to feedback inhibition by GMP. Functionally, converts guanine to guanosine monophosphate, and hypoxanthine to inosine monophosphate. Transfers the 5-phosphoribosyl group from 5-phosphoribosylpyrophosphate onto the purine. Plays a central role in the generation of purine nucleotides through the purine salvage pathway. This Saccharomyces cerevisiae (strain ATCC 204508 / S288c) (Baker's yeast) protein is Hypoxanthine-guanine phosphoribosyltransferase (HPT1).